The following is a 107-amino-acid chain: Large ribosomal subunit protein uL23 (107 aa).

It belongs to the universal ribosomal protein uL23 family. In terms of assembly, part of the 50S ribosomal subunit. Contacts protein L29, and trigger factor when it is bound to the ribosome.

In terms of biological role, one of the early assembly proteins it binds 23S rRNA. One of the proteins that surrounds the polypeptide exit tunnel on the outside of the ribosome. Forms the main docking site for trigger factor binding to the ribosome. The chain is Large ribosomal subunit protein uL23 from Rhodopirellula baltica (strain DSM 10527 / NCIMB 13988 / SH1).